Reading from the N-terminus, the 301-residue chain is Probable alpha-L-glutamate ligase (301 aa).

An ATP-grasp domain is found at 104-287 (LQFLSRKGID…IAGMIIEFIE (184 aa)). Residues K141, 178-179 (EF), D187, and 211-213 (RSN) each bind ATP. Mg(2+)-binding residues include D248, E260, and N262. D248, E260, and N262 together coordinate Mn(2+).

Belongs to the RimK family. The cofactor is Mg(2+). Mn(2+) serves as cofactor.

The polypeptide is Probable alpha-L-glutamate ligase (Coxiella burnetii (strain CbuK_Q154) (Coxiella burnetii (strain Q154))).